Consider the following 652-residue polypeptide: Phosphoglucomutase 1, chloroplastic (652 aa).

Residues 1 to 84 (MAFSAAASAS…LAARRTLRVR (84 aa)) constitute a chloroplast transit peptide. Positions 118 and 211 each coordinate alpha-D-glucose 1,6-bisphosphate. Serine 211 functions as the Phosphoserine intermediate in the catalytic mechanism. Residues serine 211, aspartate 376, aspartate 378, and aspartate 380 each coordinate Mg(2+). Serine 211 is modified (phosphoserine). Positions 380, 381, 443, 462, 464, and 475 each coordinate alpha-D-glucose 1,6-bisphosphate.

The protein belongs to the phosphohexose mutase family. Requires Mg(2+) as cofactor.

The protein resides in the plastid. It localises to the chloroplast. The enzyme catalyses alpha-D-glucose 1-phosphate = alpha-D-glucose 6-phosphate. It carries out the reaction O-phospho-L-seryl-[protein] + alpha-D-glucose 1-phosphate = alpha-D-glucose 1,6-bisphosphate + L-seryl-[protein]. The catalysed reaction is alpha-D-glucose 1,6-bisphosphate + L-seryl-[protein] = O-phospho-L-seryl-[protein] + alpha-D-glucose 6-phosphate. Inhibited by the Calvin cycle intermediates fructose-1,6-bisphosphate and ribulose-1,5-bisphosphate. Its function is as follows. Catalyzes the reversible isomerization of alpha-D-glucose 1-phosphate to alpha-D-glucose 6-phosphate. The mechanism proceeds via the intermediate compound alpha-D-glucose 1,6-bisphosphate. This enzyme participates in both the breakdown and synthesis of glucose. Required for sucrose production and accumulation necessary during plant development. Promotes gravitropic responses, negative in shoots but positive in roots, by facilitating starch granules (statoliths) formation. This is Phosphoglucomutase 1, chloroplastic from Marchantia polymorpha (Common liverwort).